The chain runs to 244 residues: Small ribosomal subunit protein uS3 (244 aa).

Residues 39–110 (IRDYVRKNLS…QIRINVIEVE (72 aa)) enclose the KH type-2 domain. A disordered region spans residues 215–244 (EDAAPSNVGQPRRRNQQRRRQQFEDRSNEG). Residues 225–234 (PRRRNQQRRR) show a composition bias toward basic residues. A compositionally biased stretch (basic and acidic residues) spans 235–244 (QQFEDRSNEG).

It belongs to the universal ribosomal protein uS3 family. In terms of assembly, part of the 30S ribosomal subunit. Forms a tight complex with proteins S10 and S14.

Functionally, binds the lower part of the 30S subunit head. Binds mRNA in the 70S ribosome, positioning it for translation. This chain is Small ribosomal subunit protein uS3, found in Synechococcus sp. (strain ATCC 27144 / PCC 6301 / SAUG 1402/1) (Anacystis nidulans).